Here is a 423-residue protein sequence, read N- to C-terminus: Histidine--tRNA ligase (423 aa).

Belongs to the class-II aminoacyl-tRNA synthetase family. As to quaternary structure, homodimer.

It localises to the cytoplasm. It carries out the reaction tRNA(His) + L-histidine + ATP = L-histidyl-tRNA(His) + AMP + diphosphate + H(+). In Haemophilus influenzae (strain PittEE), this protein is Histidine--tRNA ligase.